We begin with the raw amino-acid sequence, 138 residues long: Small ribosomal subunit protein uS11c (138 aa).

Residues 1 to 23 (MAKPILRIGSRKNTRSGSRKNVR) form a disordered region. Basic residues predominate over residues 9–23 (GSRKNTRSGSRKNVR).

It belongs to the universal ribosomal protein uS11 family. In terms of assembly, part of the 30S ribosomal subunit.

It localises to the plastid. Its subcellular location is the chloroplast. This Barbarea verna (Land cress) protein is Small ribosomal subunit protein uS11c.